We begin with the raw amino-acid sequence, 259 residues long: Snake venom serine protease homolog rhinocerase 2 (259 aa).

An N-terminal signal peptide occupies residues 1–17; sequence VLIRVLANLLLLQLSYA. A propeptide spanning residues 18–23 is cleaved from the precursor; it reads QESSEL. The 227-residue stretch at 24–250 folds into the Peptidase S1 domain; that stretch reads VIGGDECDIN…YTDWIEGIIA (227 aa). Intrachain disulfides connect cysteine 30-cysteine 164, cysteine 51-cysteine 67, cysteine 99-cysteine 257, cysteine 143-cysteine 211, cysteine 175-cysteine 190, and cysteine 201-cysteine 226. The N-linked (GlcNAc...) asparagine glycan is linked to asparagine 252.

It belongs to the peptidase S1 family. Snake venom subfamily. In terms of tissue distribution, expressed by the venom gland.

It is found in the secreted. Snake venom serine protease homolog that may act in the hemostasis system of the prey. The protein is Snake venom serine protease homolog rhinocerase 2 of Bitis rhinoceros (West African gaboon viper).